We begin with the raw amino-acid sequence, 217 residues long: Ras-related protein RABA5b (217 aa).

Residue 19-26 (GDSAVGKS) participates in GTP binding. The short motif at 41–49 (SKATIGVEF) is the Effector region element. GTP-binding positions include 67 to 71 (DTAGQ), 125 to 128 (NKCD), and 155 to 156 (SA). S-geranylgeranyl cysteine attachment occurs at residues Cys214 and Cys215.

Belongs to the small GTPase superfamily. Rab family.

It is found in the cell membrane. Intracellular vesicle trafficking and protein transport. This Arabidopsis thaliana (Mouse-ear cress) protein is Ras-related protein RABA5b (RABA5B).